We begin with the raw amino-acid sequence, 152 residues long: uncharacterized protein (152 aa).

At 1-5 (MWFPQ) the chain is on the cytoplasmic side. A helical transmembrane segment spans residues 6–26 (IIAGMAAGGAASAMTPGKVLF). At 27–38 (TNALGLGCSRSR) the chain is on the extracellular side. A helical membrane pass occupies residues 39–59 (GLFLEMFGTAVLCLTVLMTAV). The Cytoplasmic portion of the chain corresponds to 60-65 (EKRETN). Residues 66–86 (FMAALPIGISLFMAHMALTGY) traverse the membrane as a helical segment. Residues 87–110 (TGTGVNPARSLGAAVAARYFPHYH) are Extracellular-facing. The short motif at 92-94 (NPA) is the NPA element. The helical transmembrane segment at 111–131 (WIYWISPLLGAFLAWSVWQLL) threads the bilayer. Over 132-152 (QILDYTTYVNAEKAAGQKKED) the chain is Cytoplasmic.

The protein belongs to the MIP/aquaporin (TC 1.A.8) family.

It localises to the membrane. This is an uncharacterized protein from Saccharomyces cerevisiae (strain RM11-1a) (Baker's yeast).